The primary structure comprises 423 residues: Lysosomal acid phosphatase (423 aa).

The signal sequence occupies residues 1 to 30 (MAGKRSGWSRAALLQLLLGVNLVVMPPTRA). Residues 31–380 (RSLRFVTLLY…QLASGPADTE (350 aa)) lie on the Lumenal side of the membrane. The active-site Nucleophile is H42. 6 N-linked (GlcNAc...) asparagine glycosylation sites follow: N92, N133, N167, N177, N191, and N267. 3 disulfide bridges follow: C159-C370, C212-C310, and C345-C349. The Proton donor role is filled by D287. Residues N322 and N331 are each glycosylated (N-linked (GlcNAc...) asparagine). A helical transmembrane segment spans residues 381–401 (VIVALAVCGSILFLLIVLLLT). Residues 402–423 (VLFRMQAQPPGYRHVADGEDHA) lie on the Cytoplasmic side of the membrane.

This sequence belongs to the histidine acid phosphatase family. The membrane-bound form is converted to the soluble form by sequential proteolytic processing. First, the C-terminal cytoplasmic tail is removed. Cleavage by a lysosomal protease releases the soluble form in the lysosome lumen. In terms of processing, N-glycosylated. The intermediates formed during enzymatic deglycosylation suggest that all eight predicted N-glycosylation sites are used.

Its subcellular location is the lysosome membrane. It localises to the lysosome lumen. The enzyme catalyses a phosphate monoester + H2O = an alcohol + phosphate. The protein is Lysosomal acid phosphatase (ACP2) of Homo sapiens (Human).